The primary structure comprises 446 residues: Exodeoxyribonuclease 7 large subunit (446 aa).

The protein belongs to the XseA family. In terms of assembly, heterooligomer composed of large and small subunits.

Its subcellular location is the cytoplasm. It catalyses the reaction Exonucleolytic cleavage in either 5'- to 3'- or 3'- to 5'-direction to yield nucleoside 5'-phosphates.. In terms of biological role, bidirectionally degrades single-stranded DNA into large acid-insoluble oligonucleotides, which are then degraded further into small acid-soluble oligonucleotides. The polypeptide is Exodeoxyribonuclease 7 large subunit (Streptococcus agalactiae serotype III (strain NEM316)).